Here is a 456-residue protein sequence, read N- to C-terminus: Bifunctional protein GlmU (456 aa).

The pyrophosphorylase stretch occupies residues 1 to 228; it reads MTLPLHVLIL…PQDVEGANDP (228 aa). UDP-N-acetyl-alpha-D-glucosamine-binding positions include 10 to 13, Lys-24, Gln-76, 81 to 82, 103 to 105, Gly-138, Glu-153, Asn-168, and Asn-226; these read LAAG, GT, and YGD. Asp-105 provides a ligand contact to Mg(2+). Asn-226 serves as a coordination point for Mg(2+). The segment at 229-249 is linker; the sequence is WQLAQLERAWQLRAARTLCLQ. Positions 250–456 are N-acetyltransferase; sequence GVRMADPARV…GWKRPTKKSP (207 aa). UDP-N-acetyl-alpha-D-glucosamine is bound by residues Arg-332 and Lys-350. Residue His-362 is the Proton acceptor of the active site. 2 residues coordinate UDP-N-acetyl-alpha-D-glucosamine: Tyr-365 and Asn-376. Acetyl-CoA is bound by residues Ala-379, 385 to 386, Ser-404, Ala-422, and Arg-439; that span reads NY.

In the N-terminal section; belongs to the N-acetylglucosamine-1-phosphate uridyltransferase family. This sequence in the C-terminal section; belongs to the transferase hexapeptide repeat family. In terms of assembly, homotrimer. Mg(2+) is required as a cofactor.

It is found in the cytoplasm. The enzyme catalyses alpha-D-glucosamine 1-phosphate + acetyl-CoA = N-acetyl-alpha-D-glucosamine 1-phosphate + CoA + H(+). It carries out the reaction N-acetyl-alpha-D-glucosamine 1-phosphate + UTP + H(+) = UDP-N-acetyl-alpha-D-glucosamine + diphosphate. It functions in the pathway nucleotide-sugar biosynthesis; UDP-N-acetyl-alpha-D-glucosamine biosynthesis; N-acetyl-alpha-D-glucosamine 1-phosphate from alpha-D-glucosamine 6-phosphate (route II): step 2/2. The protein operates within nucleotide-sugar biosynthesis; UDP-N-acetyl-alpha-D-glucosamine biosynthesis; UDP-N-acetyl-alpha-D-glucosamine from N-acetyl-alpha-D-glucosamine 1-phosphate: step 1/1. Its pathway is bacterial outer membrane biogenesis; LPS lipid A biosynthesis. Its function is as follows. Catalyzes the last two sequential reactions in the de novo biosynthetic pathway for UDP-N-acetylglucosamine (UDP-GlcNAc). The C-terminal domain catalyzes the transfer of acetyl group from acetyl coenzyme A to glucosamine-1-phosphate (GlcN-1-P) to produce N-acetylglucosamine-1-phosphate (GlcNAc-1-P), which is converted into UDP-GlcNAc by the transfer of uridine 5-monophosphate (from uridine 5-triphosphate), a reaction catalyzed by the N-terminal domain. In Xanthomonas axonopodis pv. citri (strain 306), this protein is Bifunctional protein GlmU.